The following is a 442-amino-acid chain: 23S rRNA (uracil(1939)-C(5))-methyltransferase RlmD (442 aa).

The 66-residue stretch at 10–75 folds into the TRAM domain; that stretch reads AKQTAKNCCK…RQYGRAKANK (66 aa). 4 residues coordinate [4Fe-4S] cluster: Cys-88, Cys-94, Cys-97, and Cys-173. S-adenosyl-L-methionine is bound by residues Gln-276, Phe-305, Asn-310, Glu-326, Asn-353, and Asp-374. Cys-400 serves as the catalytic Nucleophile.

This sequence belongs to the class I-like SAM-binding methyltransferase superfamily. RNA M5U methyltransferase family. RlmD subfamily.

The catalysed reaction is uridine(1939) in 23S rRNA + S-adenosyl-L-methionine = 5-methyluridine(1939) in 23S rRNA + S-adenosyl-L-homocysteine + H(+). In terms of biological role, catalyzes the formation of 5-methyl-uridine at position 1939 (m5U1939) in 23S rRNA. This Haemophilus ducreyi (strain 35000HP / ATCC 700724) protein is 23S rRNA (uracil(1939)-C(5))-methyltransferase RlmD.